The sequence spans 151 residues: Large ribosomal subunit protein uL15 (151 aa).

The disordered stretch occupies residues 1 to 60 (MAENSPLKAHNLRPAPGAKTAKTRVGRGEASKGKTAGRGTKGTKARYQVPERFEGGQMPL).

Belongs to the universal ribosomal protein uL15 family. As to quaternary structure, part of the 50S ribosomal subunit.

Functionally, binds to the 23S rRNA. This Streptomyces griseus subsp. griseus (strain JCM 4626 / CBS 651.72 / NBRC 13350 / KCC S-0626 / ISP 5235) protein is Large ribosomal subunit protein uL15.